Consider the following 187-residue polypeptide: uncharacterized protein (187 aa).

This is an uncharacterized protein from Homo sapiens (Human).